Here is a 216-residue protein sequence, read N- to C-terminus: Adenylate kinase (216 aa).

10–15 (GAGKGT) is an ATP binding site. The segment at 30–59 (STGDMLRAAVNAGTEVGKRAKAVMDAGKLV) is NMP. AMP-binding positions include Thr31, Arg36, 57 to 59 (KLV), 85 to 88 (GFPR), and Gln92. Positions 126–163 (GRYTCAQCGTVYHDTDKVPVEEGVCDKCGSTHFKRRPD) are LID. Arg127 is a binding site for ATP. Zn(2+) is bound by residues Cys130 and Cys133. 136-137 (VY) contacts ATP. Zn(2+)-binding residues include Cys150 and Cys153. Positions 160 and 172 each coordinate AMP. Ala200 serves as a coordination point for ATP.

Belongs to the adenylate kinase family. Monomer.

The protein resides in the cytoplasm. It carries out the reaction AMP + ATP = 2 ADP. The protein operates within purine metabolism; AMP biosynthesis via salvage pathway; AMP from ADP: step 1/1. Functionally, catalyzes the reversible transfer of the terminal phosphate group between ATP and AMP. Plays an important role in cellular energy homeostasis and in adenine nucleotide metabolism. The polypeptide is Adenylate kinase (Rhizobium etli (strain ATCC 51251 / DSM 11541 / JCM 21823 / NBRC 15573 / CFN 42)).